The sequence spans 348 residues: Phosphoribosylformylglycinamidine cyclo-ligase (348 aa).

Belongs to the AIR synthase family.

Its subcellular location is the cytoplasm. It catalyses the reaction 2-formamido-N(1)-(5-O-phospho-beta-D-ribosyl)acetamidine + ATP = 5-amino-1-(5-phospho-beta-D-ribosyl)imidazole + ADP + phosphate + H(+). It participates in purine metabolism; IMP biosynthesis via de novo pathway; 5-amino-1-(5-phospho-D-ribosyl)imidazole from N(2)-formyl-N(1)-(5-phospho-D-ribosyl)glycinamide: step 2/2. This chain is Phosphoribosylformylglycinamidine cyclo-ligase, found in Aromatoleum aromaticum (strain DSM 19018 / LMG 30748 / EbN1) (Azoarcus sp. (strain EbN1)).